Here is a 632-residue protein sequence, read N- to C-terminus: tRNA uridine 5-carboxymethylaminomethyl modification enzyme MnmG (632 aa).

Residue 13–18 (GGGHAG) participates in FAD binding. 273 to 287 (GPRYCPSIEDKIHRF) is an NAD(+) binding site.

It belongs to the MnmG family. As to quaternary structure, homodimer. Heterotetramer of two MnmE and two MnmG subunits. FAD is required as a cofactor.

The protein resides in the cytoplasm. Its function is as follows. NAD-binding protein involved in the addition of a carboxymethylaminomethyl (cmnm) group at the wobble position (U34) of certain tRNAs, forming tRNA-cmnm(5)s(2)U34. This is tRNA uridine 5-carboxymethylaminomethyl modification enzyme MnmG from Psychrobacter cryohalolentis (strain ATCC BAA-1226 / DSM 17306 / VKM B-2378 / K5).